The following is a 1414-amino-acid chain: DNA-directed RNA polymerase subunit beta' (1414 aa).

Positions 70, 72, 85, and 88 each coordinate Zn(2+). Asp-460, Asp-462, and Asp-464 together coordinate Mg(2+). Zn(2+) contacts are provided by Cys-819, Cys-893, Cys-900, and Cys-903. The interval 1391-1414 is disordered; sequence AEEAFDFGTPSAPAEEPQQHPAAE. A compositionally biased stretch (low complexity) spans 1400 to 1414; the sequence is PSAPAEEPQQHPAAE.

The protein belongs to the RNA polymerase beta' chain family. As to quaternary structure, the RNAP catalytic core consists of 2 alpha, 1 beta, 1 beta' and 1 omega subunit. When a sigma factor is associated with the core the holoenzyme is formed, which can initiate transcription. Mg(2+) serves as cofactor. Requires Zn(2+) as cofactor.

It carries out the reaction RNA(n) + a ribonucleoside 5'-triphosphate = RNA(n+1) + diphosphate. In terms of biological role, DNA-dependent RNA polymerase catalyzes the transcription of DNA into RNA using the four ribonucleoside triphosphates as substrates. The polypeptide is DNA-directed RNA polymerase subunit beta' (Burkholderia lata (strain ATCC 17760 / DSM 23089 / LMG 22485 / NCIMB 9086 / R18194 / 383)).